Consider the following 426-residue polypeptide: tRNA(Ile)-lysidine synthase (426 aa).

Residue S21–S26 coordinates ATP.

This sequence belongs to the tRNA(Ile)-lysidine synthase family.

It is found in the cytoplasm. It carries out the reaction cytidine(34) in tRNA(Ile2) + L-lysine + ATP = lysidine(34) in tRNA(Ile2) + AMP + diphosphate + H(+). Ligates lysine onto the cytidine present at position 34 of the AUA codon-specific tRNA(Ile) that contains the anticodon CAU, in an ATP-dependent manner. Cytidine is converted to lysidine, thus changing the amino acid specificity of the tRNA from methionine to isoleucine. In Enterobacter sp. (strain 638), this protein is tRNA(Ile)-lysidine synthase.